We begin with the raw amino-acid sequence, 75 residues long: Tautomerase PptA (75 aa).

The Proton acceptor; via imino nitrogen role is filled by Pro2.

The protein belongs to the 4-oxalocrotonate tautomerase family. PptA subfamily. In terms of assembly, homodimer.

It is found in the cytoplasm. The chain is Tautomerase PptA from Escherichia coli O139:H28 (strain E24377A / ETEC).